The primary structure comprises 296 residues: MIFKQYLQVTKPGIIFGNLISVIGGFLLASKGSIDYPLFIYTLVGVSLVVASGCVFNNYIDRDIDRKMERTKNRVLVKGLISPAVSLVYATLLGIAGFMLLWFGANPLACWLGVMGFVVYVGVYSLYMKRHSVYGTLIGSLSGAAPPVIGYCAVTGEFDSGAAILLAIFSLWQMPHSYAIAIFRFKDYQAANIPVLPVVKGISVAKNHITLYIIAFAVATLMLSLGGYAGYKYLVVAAAVSVWWLGMALRGYKVADDRIWARKLFGFSIIAITALSVMMSVDFMVPDSHTLLAAVW.

Residues 1–9 (MIFKQYLQV) lie on the Cytoplasmic side of the membrane. A helical transmembrane segment spans residues 10–28 (TKPGIIFGNLISVIGGFLL). The Periplasmic segment spans residues 29 to 37 (ASKGSIDYP). A helical membrane pass occupies residues 38 to 56 (LFIYTLVGVSLVVASGCVF). The Cytoplasmic portion of the chain corresponds to 57 to 78 (NNYIDRDIDRKMERTKNRVLVK). The helical transmembrane segment at 79 to 97 (GLISPAVSLVYATLLGIAG) threads the bilayer. The Periplasmic portion of the chain corresponds to 98–107 (FMLLWFGANP). The helical transmembrane segment at 108–126 (LACWLGVMGFVVYVGVYSL) threads the bilayer. The Cytoplasmic portion of the chain corresponds to 127–197 (YMKRHSVYGT…YQAANIPVLP (71 aa)). The helical transmembrane segment at 198 to 216 (VVKGISVAKNHITLYIIAF) threads the bilayer. Residues 217 to 228 (AVATLMLSLGGY) lie on the Periplasmic side of the membrane. Residues 229–247 (AGYKYLVVAAAVSVWWLGM) form a helical membrane-spanning segment. Residues 248-268 (ALRGYKVADDRIWARKLFGFS) are Cytoplasmic-facing. Residues 269–287 (IIAITALSVMMSVDFMVPD) traverse the membrane as a helical segment. Residues 288–296 (SHTLLAAVW) lie on the Periplasmic side of the membrane.

This sequence belongs to the UbiA prenyltransferase family. Protoheme IX farnesyltransferase subfamily.

Its subcellular location is the cell inner membrane. It carries out the reaction heme b + (2E,6E)-farnesyl diphosphate + H2O = Fe(II)-heme o + diphosphate. It participates in porphyrin-containing compound metabolism; heme O biosynthesis; heme O from protoheme: step 1/1. Its function is as follows. Converts heme B (protoheme IX) to heme O by substitution of the vinyl group on carbon 2 of heme B porphyrin ring with a hydroxyethyl farnesyl side group. The polypeptide is Protoheme IX farnesyltransferase (Escherichia coli O1:K1 / APEC).